A 246-amino-acid polypeptide reads, in one-letter code: Octanoyltransferase (246 aa).

A BPL/LPL catalytic domain is found at Asp-54–Ile-240. Substrate is bound by residues Arg-96–His-103, Ala-163–Gly-165, and Gly-176–Ala-178. Cys-194 (acyl-thioester intermediate) is an active-site residue.

This sequence belongs to the LipB family.

The protein resides in the cytoplasm. It catalyses the reaction octanoyl-[ACP] + L-lysyl-[protein] = N(6)-octanoyl-L-lysyl-[protein] + holo-[ACP] + H(+). The protein operates within protein modification; protein lipoylation via endogenous pathway; protein N(6)-(lipoyl)lysine from octanoyl-[acyl-carrier-protein]: step 1/2. In terms of biological role, catalyzes the transfer of endogenously produced octanoic acid from octanoyl-acyl-carrier-protein onto the lipoyl domains of lipoate-dependent enzymes. Lipoyl-ACP can also act as a substrate although octanoyl-ACP is likely to be the physiological substrate. This Synechococcus sp. (strain WH7803) protein is Octanoyltransferase.